We begin with the raw amino-acid sequence, 60 residues long: UPF0337 protein asr4653 (60 aa).

This sequence belongs to the UPF0337 (CsbD) family.

This is UPF0337 protein asr4653 from Nostoc sp. (strain PCC 7120 / SAG 25.82 / UTEX 2576).